Reading from the N-terminus, the 423-residue chain is MLRVRCLRGGSRGAEAVHYIGSRLGGSLTGWVQRTFQSTQAATASSQNSCAAEDKATHPLPKDCPVSSYNEWDPLEEVIVGRAENACVPPFTVEVKANTYEKYWPFYQKNGGLYFPKDHLKKAVAEVEEMCNILSMEGVTVKRPDPIDWSLKYKTPDFESTGLYSAMPRDILMVVGNEIIEAPMAWRSRFFEYRAYRSIIKDYFHRGAKWTTAPKPTMADELYDQDYPIHSVEDRHKLAAQGKFVTTEFEPCFDAADFIRAGRDIFAQRSQVTNYLGIEWMRRHLAPDYRVHIISFKDPNPMHIDATFNIIGPGLVLSNPDRPCHQIDLFKKAGWTIVTPPTPVIPDDHPLWMSSKWLSMNVLMLDEKRVMVDANEVPIQKMFEKLGISTIKVNIRNANSLGGGFHCWTCDVRRRGTLQSYFD.

A mitochondrion-targeting transit peptide spans 1 to 43 (MLRVRCLRGGSRGAEAVHYIGSRLGGSLTGWVQRTFQSTQAAT). Serine 46 and serine 49 each carry phosphoserine. Residue aspartate 170 coordinates arginine. Active-site residues include aspartate 254 and histidine 303. Aspartate 305, arginine 322, serine 354, and serine 355 together coordinate arginine. Lysine 385 carries the post-translational modification N6-acetyllysine. The active-site Amidino-cysteine intermediate is cysteine 407.

It belongs to the amidinotransferase family. As to quaternary structure, homodimer. As to expression, highly expressed in the kidney and pancreas, especially in the proximal tubules of the kidney, and alpha cells of the pancreatic islets (at protein level). Moderately expressed in liver hepatocytes (at protein level). Expressed in the kidney, pancreas, liver, colon, ileum, jejunum, heart and skeletal muscle. In reproductive tissues, expressed in the testis, epididymis, ovary, oviduct and uterus. Expressed throughout the brain in neurons, astrocytes and oligodendrocytes. In 12.5 dpc embryos, it is expressed in the middle part of the somites, hepatic primordium and wall of the dorsal aorta. Expressed in 15.5 dpc embryos in isolated cells throughout the central nervous system, skeletal muscles, gonad primordia, caudal somites, liver and pancreas, but not in the choroid plexus, root ganglia or kidney. Expressed in skeletal muscle, kidney, pancreas, central nervous system, liver and intestine epithelial cells, but not in epidermis, dermis, olfactory epithelium, trachea, lung, stomach or heart in 18.5 dpc embryos.

It localises to the mitochondrion inner membrane. The catalysed reaction is L-arginine + glycine = guanidinoacetate + L-ornithine. It carries out the reaction 4-aminobutanoate + L-arginine = 4-guanidinobutanoate + L-ornithine. It catalyses the reaction beta-alanine + L-arginine = 3-guanidinopropanoate + L-ornithine. The enzyme catalyses taurine + L-arginine = taurocyamine + L-ornithine. It functions in the pathway amine and polyamine biosynthesis; creatine biosynthesis; creatine from L-arginine and glycine: step 1/2. Functionally, transamidinase that catalyzes the transfer of the amidino group of L-arginine onto the amino moiety of acceptor metabolites such as glycine, beta-alanine, gamma-aminobutyric acid (GABA) and taurine yielding the corresponding guanidine derivatives. Catalyzes the rate-limiting step of creatine biosynthesis, namely the transfer of the amidino group from L-arginine to glycine to generate guanidinoacetate, which is then methylated by GAMT to form creatine. Provides creatine as a source for ATP generation in tissues with high energy demands, in particular skeletal muscle, heart and brain. In Rattus norvegicus (Rat), this protein is Glycine amidinotransferase, mitochondrial (Gatm).